A 439-amino-acid chain; its full sequence is COBRA-like protein 7 (439 aa).

An N-terminal signal peptide occupies residues 1–22 (MDVDQLILFVFVCCLSSRFADA). Residues Asn-138, Asn-181, Asn-186, Asn-232, Asn-312, and Asn-346 are each glycosylated (N-linked (GlcNAc...) asparagine). Asn-412 is lipidated: GPI-anchor amidated asparagine. The propeptide at 413 to 439 (GGPDSRVSAAQLIASSCLLLPFIFLIM) is removed in mature form.

It belongs to the COBRA family.

The protein localises to the cell membrane. Its function is as follows. Involved in determining the orientation of cell expansion, probably by playing an important role in cellulose deposition. May act by recruiting cellulose synthesizing complexes to discrete positions on the cell surface. The sequence is that of COBRA-like protein 7 (BC1LP1) from Oryza sativa subsp. japonica (Rice).